The chain runs to 366 residues: Chorismate synthase (366 aa).

Residues Arg48 and Arg54 each contribute to the NADP(+) site. FMN is bound by residues 125–127 (RSS), 238–239 (NA), Gly278, 293–297 (KPTSS), and Arg319.

This sequence belongs to the chorismate synthase family. As to quaternary structure, homotetramer. The cofactor is FMNH2.

The enzyme catalyses 5-O-(1-carboxyvinyl)-3-phosphoshikimate = chorismate + phosphate. It participates in metabolic intermediate biosynthesis; chorismate biosynthesis; chorismate from D-erythrose 4-phosphate and phosphoenolpyruvate: step 7/7. Catalyzes the anti-1,4-elimination of the C-3 phosphate and the C-6 proR hydrogen from 5-enolpyruvylshikimate-3-phosphate (EPSP) to yield chorismate, which is the branch point compound that serves as the starting substrate for the three terminal pathways of aromatic amino acid biosynthesis. This reaction introduces a second double bond into the aromatic ring system. The polypeptide is Chorismate synthase (Methylococcus capsulatus (strain ATCC 33009 / NCIMB 11132 / Bath)).